We begin with the raw amino-acid sequence, 211 residues long: tRNA (guanine-N(7)-)-methyltransferase (211 aa).

4 residues coordinate S-adenosyl-L-methionine: Asp40, Glu65, Asn92, and Asp117. The active site involves Asp117. Lys121 is a substrate binding site. The interaction with RNA stretch occupies residues 123–128 (RHNKRR). Asp153 contributes to the substrate binding site.

The protein belongs to the class I-like SAM-binding methyltransferase superfamily. TrmB family.

It catalyses the reaction guanosine(46) in tRNA + S-adenosyl-L-methionine = N(7)-methylguanosine(46) in tRNA + S-adenosyl-L-homocysteine. The protein operates within tRNA modification; N(7)-methylguanine-tRNA biosynthesis. Its function is as follows. Catalyzes the formation of N(7)-methylguanine at position 46 (m7G46) in tRNA. The sequence is that of tRNA (guanine-N(7)-)-methyltransferase from Synechocystis sp. (strain ATCC 27184 / PCC 6803 / Kazusa).